The sequence spans 78 residues: Large ribosomal subunit protein bL31 (78 aa).

Zn(2+) is bound by residues Cys16, Cys18, Cys38, and Cys41.

The protein belongs to the bacterial ribosomal protein bL31 family. Type A subfamily. Part of the 50S ribosomal subunit. The cofactor is Zn(2+).

Functionally, binds the 23S rRNA. This Frankia alni (strain DSM 45986 / CECT 9034 / ACN14a) protein is Large ribosomal subunit protein bL31.